Reading from the N-terminus, the 342-residue chain is UDP-3-O-acylglucosamine N-acyltransferase (342 aa).

The active-site Proton acceptor is the H242.

It belongs to the transferase hexapeptide repeat family. LpxD subfamily. Homotrimer.

It carries out the reaction a UDP-3-O-[(3R)-3-hydroxyacyl]-alpha-D-glucosamine + a (3R)-hydroxyacyl-[ACP] = a UDP-2-N,3-O-bis[(3R)-3-hydroxyacyl]-alpha-D-glucosamine + holo-[ACP] + H(+). The protein operates within bacterial outer membrane biogenesis; LPS lipid A biosynthesis. In terms of biological role, catalyzes the N-acylation of UDP-3-O-acylglucosamine using 3-hydroxyacyl-ACP as the acyl donor. Is involved in the biosynthesis of lipid A, a phosphorylated glycolipid that anchors the lipopolysaccharide to the outer membrane of the cell. The chain is UDP-3-O-acylglucosamine N-acyltransferase from Leptothrix cholodnii (strain ATCC 51168 / LMG 8142 / SP-6) (Leptothrix discophora (strain SP-6)).